A 353-amino-acid polypeptide reads, in one-letter code: Thiamine thiazole synthase 1, chloroplastic (353 aa).

Residues 1–48 (MATLTSSICSKPKASVFDPHKSSFHGVPIATQARLSPVKSTPVNLAVT) constitute a chloroplast transit peptide. Substrate-binding positions include A97, 117 to 118 (EQ), G125, and A190. The residue at position 219 (C219) is a 2,3-didehydroalanine (Cys). Substrate is bound by residues D221, H236, M288, and 298-300 (RMG).

It belongs to the THI4 family. In terms of assembly, homooctamer. The cofactor is Fe cation. In terms of processing, during the catalytic reaction, a sulfide is transferred from Cys-219 to a reaction intermediate, generating a dehydroalanine residue.

It localises to the plastid. Its subcellular location is the chloroplast. The enzyme catalyses [ADP-thiazole synthase]-L-cysteine + glycine + NAD(+) = [ADP-thiazole synthase]-dehydroalanine + ADP-5-ethyl-4-methylthiazole-2-carboxylate + nicotinamide + 3 H2O + 2 H(+). Involved in biosynthesis of the thiamine precursor thiazole. Catalyzes the conversion of NAD and glycine to adenosine diphosphate 5-(2-hydroxyethyl)-4-methylthiazole-2-carboxylic acid (ADT), an adenylated thiazole intermediate. The reaction includes an iron-dependent sulfide transfer from a conserved cysteine residue of the protein to a thiazole intermediate. The enzyme can only undergo a single turnover, which suggests it is a suicide enzyme. May have additional roles in adaptation to various stress conditions and in DNA damage tolerance. The chain is Thiamine thiazole synthase 1, chloroplastic from Vitis vinifera (Grape).